Consider the following 654-residue polypeptide: MKKQQSSNESFDVIVIGGGHAGCEAAITTAKLGFSTALFTINLDRIAWQPCNPAVGGPAKSQLVHEVDALGGIIGKLADETAIQKRILNASRGPAVWALRAQTDKREYSKRMIEILQNTDNLSLKEAMITELLIKEVETFTKNSKNTTKQIKGVKTFFGTCYSAKSIIITAGTFLEGRIWIGNKSMSAGRSGEQAAQGLTESLHSLGIKTERLKTGTPARVDKKSISFDALDIQPSTASDKYFSFDPKIKNDMPQICCHITRTTQKTHELIRNNLHLTPIYGGFIDSKGPRYCPSIEDKIVKFADKNSHQIFLEPEGINTPEIYVQGFSTGLPENIQLELLRTLPGLNKCKMLRPAYAVEYEYIPATQLKLSLETIEIDNLFSAGQINGTTGYEEAAAQGLVAGINATRKLNMKDPIIFSRESSYIGTMINDLITRDLKEPYRVLTSRSEYRLTLRGDNADRRLTPLGFEIGLIDERRWFAHKEKMKLLKEENSRLENTRLKCTDEIARNIELESGSKIKGSTTLKDLLKRPNVHYSDFIKYDLANKSLPIAVMEGVEIDIKYEGYLKRQQNNIDQINRQSLKSLPIEINYDLIDTLSLEARENLNKIKPTNFGDASKIPGVSKADLTALLVWLKIKEIKKEKTNSFVEKKLSS.

An FAD-binding site is contributed by 17 to 22; sequence GGGHAG. Residue 289-303 coordinates NAD(+); it reads GPRYCPSIEDKIVKF.

This sequence belongs to the MnmG family. In terms of assembly, homodimer. Heterotetramer of two MnmE and two MnmG subunits. The cofactor is FAD.

The protein localises to the cytoplasm. NAD-binding protein involved in the addition of a carboxymethylaminomethyl (cmnm) group at the wobble position (U34) of certain tRNAs, forming tRNA-cmnm(5)s(2)U34. This chain is tRNA uridine 5-carboxymethylaminomethyl modification enzyme MnmG, found in Prochlorococcus marinus (strain MIT 9515).